The following is a 503-amino-acid chain: ATP synthase subunit alpha (503 aa).

169–176 (GDRGTGKT) contacts ATP.

This sequence belongs to the ATPase alpha/beta chains family. As to quaternary structure, F-type ATPases have 2 components, CF(1) - the catalytic core - and CF(0) - the membrane proton channel. CF(1) has five subunits: alpha(3), beta(3), gamma(1), delta(1), epsilon(1). CF(0) has three main subunits: a(1), b(2) and c(9-12). The alpha and beta chains form an alternating ring which encloses part of the gamma chain. CF(1) is attached to CF(0) by a central stalk formed by the gamma and epsilon chains, while a peripheral stalk is formed by the delta and b chains.

It localises to the cell inner membrane. It carries out the reaction ATP + H2O + 4 H(+)(in) = ADP + phosphate + 5 H(+)(out). Produces ATP from ADP in the presence of a proton gradient across the membrane. The alpha chain is a regulatory subunit. This is ATP synthase subunit alpha from Leptospira borgpetersenii serovar Hardjo-bovis (strain L550).